The sequence spans 965 residues: Forespore membrane adapter protein MUG56 (965 aa).

The interval 70 to 175 (SFLMHKSTDE…VQNSNSTSTS (106 aa)) is disordered. Residues 82–101 (DTPSNLDSPSTQNVGSTNNT) show a composition bias toward polar residues. Residues 102–114 (RASQSLLRRSSSF) show a composition bias toward low complexity. The segment covering 124 to 158 (THASTDNNPFSESSTLQPQTAERTSQQAVRSAITE) has biased composition (polar residues). Low complexity predominate over residues 159–175 (TTNPSVSVQNSNSTSTS). PH domains are found at residues 562–737 (PTPV…EVAS) and 800–961 (VIRM…KEIN).

The protein belongs to the SPO71 family.

It is found in the cytoplasm. It localises to the nucleus. The protein localises to the prospore membrane. Its function is as follows. May recruit a lipid transfer protein to the forespore membrane during sporulation, thereby aiding forespore membrane formation. Required for meiosis. In Schizosaccharomyces pombe (strain 972 / ATCC 24843) (Fission yeast), this protein is Forespore membrane adapter protein MUG56.